The sequence spans 669 residues: Armadillo repeat-containing protein gudu (669 aa).

A compositionally biased stretch (polar residues) spans 1–10 (MIGTSSGTSH). The segment at 1-53 (MIGTSSGTSHNRSRKKKEQCGSCPNRFSKDKRQVAAEDSDTTEVESSTDEEER) is disordered. Residues 37–51 (EDSDTTEVESSTDEE) show a composition bias toward acidic residues. ARM repeat units lie at residues 100-139 (QINQFAISDIGGLDVLVNILECSDTKCCLGALKVLSDITL), 141-180 (IDIRKTIVDLDGIPLIVDILNSSMKDLKTMAAETLANVCK), 240-279 (KHNMEQMRKSGIVPLMAQLLKSCHIDVVIPIMGTVRKCSS), 281-320 (PKFQLAITTEGMIPDIVSHLSSENTELKMEGSTAIYKCAF), 322-365 (GTTR…MCAV), 367-406 (DANVKVLDQLRTVNHLVALLNDECDEVLTNVTGAISECVR), 408-447 (QSNREQLRQAGGLPAMVSLLNSSHAPLLENLAKGLKECAE), 492-531 (DSAELVRSLVGAMELVVGLLKSKDIMVLSAVCAAIATIAQ), 574-613 (GNNTEELGRLRTVTPIVTYMTSDNPLVHRSTAMALEKLSM), and 615-654 (PQNCITMHQSGVVPFLLECIGSTNKELQLAAAGCLRNIRE).

Highly expressed in testis.

Functionally, important for spermatogenesis where it may have a role in sperm individualization. The protein is Armadillo repeat-containing protein gudu of Drosophila melanogaster (Fruit fly).